The chain runs to 585 residues: Protein-lysine N-methyltransferase EFM1 (585 aa).

In terms of domain architecture, SET spans 23-281 (PKISFRITED…AQDELFNNYG (259 aa)). Tyrosine 280 is an S-adenosyl-L-methionine binding site.

The protein belongs to the class V-like SAM-binding methyltransferase superfamily. RKM1 family.

Its subcellular location is the cytoplasm. S-adenosyl-L-methionine-dependent protein-lysine N-methyltransferase that monomethylates elongation factor 1-alpha (TEF1/TEF2) at 'Lys-30'. In Saccharomyces cerevisiae (strain ATCC 204508 / S288c) (Baker's yeast), this protein is Protein-lysine N-methyltransferase EFM1.